The primary structure comprises 362 residues: Adenosine deaminase (362 aa).

Residues His19 and His21 each coordinate Zn(2+). Substrate contacts are provided by His21, Asp23, and Gly181. A Zn(2+)-binding site is contributed by His208. Glu211 functions as the Proton donor in the catalytic mechanism. Asp300 lines the Zn(2+) pocket.

It belongs to the metallo-dependent hydrolases superfamily. Adenosine and AMP deaminases family. Adenosine deaminase subfamily. It depends on Zn(2+) as a cofactor.

The enzyme catalyses adenosine + H2O + H(+) = inosine + NH4(+). It catalyses the reaction 2'-deoxyadenosine + H2O + H(+) = 2'-deoxyinosine + NH4(+). In terms of biological role, catalyzes the hydrolytic deamination of adenosine and 2-deoxyadenosine. This Mycobacterium sp. (strain JLS) protein is Adenosine deaminase.